The following is a 100-amino-acid chain: Urease subunit gamma (100 aa).

This sequence belongs to the urease gamma subunit family. In terms of assembly, heterotrimer of UreA (gamma), UreB (beta) and UreC (alpha) subunits. Three heterotrimers associate to form the active enzyme.

The protein resides in the cytoplasm. The enzyme catalyses urea + 2 H2O + H(+) = hydrogencarbonate + 2 NH4(+). It functions in the pathway nitrogen metabolism; urea degradation; CO(2) and NH(3) from urea (urease route): step 1/1. The polypeptide is Urease subunit gamma (Cupriavidus taiwanensis (strain DSM 17343 / BCRC 17206 / CCUG 44338 / CIP 107171 / LMG 19424 / R1) (Ralstonia taiwanensis (strain LMG 19424))).